Reading from the N-terminus, the 523-residue chain is MPELGSLLLSTQAVAAPGELLNLALHAGTVGPEAAVLVAMIATLLVDLAGEKVSVRWVPPICYAGLGSALVLLALQWNAPLEPSFLGAFLSDHLAIAFRAVVALSTLLSLLISWRYAEQSGTPVGEYAAILLAATLGGMLLCGATDLVSVFVSLETLSVASYLLSGYMKRDARSSEAALKYLLVGSAAAAVFLYGASLLYGLSGSTSLEVIGNALVTSPTPLAALALVFVLATVAFKIAAVPFHQWTPDVYEGSPTPVVAFLSVGSKAAGFALALRLLVGCFGSFDTQWKLLFTVLAILSMTLGNVVALAQTSMKRMLAYSSIGQAGFVMIGLVCGTEDGFAAMVLYMATYLFMNLGAFACIILFSIRTGSDRISDYAGLYQKDPLITLGLSLCLLSLGGIPPMLGFFGKIYLFFAGWADHQYVLVVVGLVTSVISIYYYIGVIKMMVVKEPQEASEVVKAYPPINWSTMGLPPLRVALVLCVLVTAVGGILSNPLFEWASSTVAGTPLLQQAIATSSGASLG.

13 helical membrane passes run 30-50 (VGPEAAVLVAMIATLLVDLAG), 57-77 (WVPPICYAGLGSALVLLALQW), 94-114 (LAIAFRAVVALSTLLSLLISW), 128-148 (AAILLAATLGGMLLCGATDLV), 182-202 (LLVGSAAAAVFLYGASLLYGL), 223-243 (AALALVFVLATVAFKIAAVPF), 255-275 (PTPVVAFLSVGSKAAGFALAL), 291-311 (LLFTVLAILSMTLGNVVALAQ), 317-337 (MLAYSSIGQAGFVMIGLVCGT), 345-365 (VLYMATYLFMNLGAFACIILF), 389-409 (LGLSLCLLSLGGIPPMLGFFG), 424-444 (VLVVVGLVTSVISIYYYIGVI), and 477-497 (VALVLCVLVTAVGGILSNPLF).

The protein belongs to the complex I subunit 2 family. As to quaternary structure, NDH-1 can be composed of about 15 different subunits; different subcomplexes with different compositions have been identified which probably have different functions.

Its subcellular location is the cellular thylakoid membrane. It catalyses the reaction a plastoquinone + NADH + (n+1) H(+)(in) = a plastoquinol + NAD(+) + n H(+)(out). The enzyme catalyses a plastoquinone + NADPH + (n+1) H(+)(in) = a plastoquinol + NADP(+) + n H(+)(out). NDH-1 shuttles electrons from an unknown electron donor, via FMN and iron-sulfur (Fe-S) centers, to quinones in the respiratory and/or the photosynthetic chain. The immediate electron acceptor for the enzyme in this species is believed to be plastoquinone. Couples the redox reaction to proton translocation, and thus conserves the redox energy in a proton gradient. Cyanobacterial NDH-1 also plays a role in inorganic carbon-concentration. The polypeptide is NAD(P)H-quinone oxidoreductase subunit 2 (Synechococcus sp. (strain CC9311)).